The following is a 90-amino-acid chain: Probable Fe(2+)-trafficking protein (90 aa).

It belongs to the Fe(2+)-trafficking protein family.

Its function is as follows. Could be a mediator in iron transactions between iron acquisition and iron-requiring processes, such as synthesis and/or repair of Fe-S clusters in biosynthetic enzymes. The sequence is that of Probable Fe(2+)-trafficking protein from Pseudomonas fluorescens (strain SBW25).